Consider the following 232-residue polypeptide: Ribosomal RNA small subunit methyltransferase G (232 aa).

Residues Gly93, Leu98, 144 to 145 (VE), and Arg163 contribute to the S-adenosyl-L-methionine site.

This sequence belongs to the methyltransferase superfamily. RNA methyltransferase RsmG family.

Its subcellular location is the cytoplasm. The catalysed reaction is guanosine(527) in 16S rRNA + S-adenosyl-L-methionine = N(7)-methylguanosine(527) in 16S rRNA + S-adenosyl-L-homocysteine. In terms of biological role, specifically methylates the N7 position of guanine in position 527 of 16S rRNA. The polypeptide is Ribosomal RNA small subunit methyltransferase G (Burkholderia pseudomallei (strain 1106a)).